A 333-amino-acid polypeptide reads, in one-letter code: Torsin-1A (333 aa).

Residues 1–20 (MKLGRAALALLLLAPCVVRA) form the signal peptide. Residues 92 to 252 (KPKKPLTLSL…VSVFNNKNSG (161 aa)) are interaction with SNAPIN. Position 103-110 (103-110 (GWTGTGKN)) interacts with ATP. N-linked (GlcNAc...) asparagine glycans are attached at residues Asn144 and Asn159. An interaction with KLC1 region spans residues 252 to 333 (GFWHSSLIDR…FTKLDYYLDD (82 aa)). Positions 313 to 333 (KVFSDKGCKTVFTKLDYYLDD) are interaction with SYNE3.

The protein belongs to the ClpA/ClpB family. Torsin subfamily. In terms of assembly, homohexamer. Interacts with TOR1B; the interaction may be specific of neural tissues. Interacts (ATP-bound) with TOR1AIP1 and TOR1AIP2; the interactions induce ATPase activity. Interacts with KLHL14; preferentially when ATP-free. Interacts with KLC1 (via TPR repeats); the interaction associates TOR1A with the kinesin oligomeric complex. Interacts with COPS4; the interaction associates TOR1A with the CSN complex. Interacts with SNAPIN; the interaction is direct and associates SNAPIN with the CSN complex. Interacts with STON2. Interacts (ATP-bound) with SYNE3 (via KASH domain); the interaction is required for SYNE3 nuclear envelope localization. Interacts with VIM; the interaction associates TOR1A with the cytoskeleton. Interacts with PLEC. Interacts (ATP-bound) with SLC6A3; regulates SLC6A3 transport to the plasma membrane. In terms of processing, N-glycosylated. In terms of tissue distribution, widely expressed (at protein level).

The protein resides in the endoplasmic reticulum lumen. The protein localises to the nucleus membrane. It localises to the cell projection. Its subcellular location is the growth cone. It is found in the cytoplasmic vesicle membrane. The protein resides in the synapse. The protein localises to the synaptosome. It localises to the cytoplasm. Its subcellular location is the cytoskeleton. It is found in the cytoplasmic vesicle. The protein resides in the secretory vesicle. The protein localises to the synaptic vesicle. The catalysed reaction is ATP + H2O = ADP + phosphate + H(+). Protein with chaperone functions important for the control of protein folding, processing, stability and localization as well as for the reduction of misfolded protein aggregates. Involved in the regulation of synaptic vesicle recycling, controls STON2 protein stability in collaboration with the COP9 signalosome complex (CSN). In the nucleus, may link the cytoskeleton with the nuclear envelope, this mechanism seems to be crucial for the control of nuclear polarity, cell movement and, specifically in neurons, nuclear envelope integrity. Participates in the cellular trafficking and may regulate the subcellular location of multipass membrane proteins such as the dopamine transporter SLC6A3, leading to the modulation of dopamine neurotransmission. In the endoplasmic reticulum, plays a role in the quality control of protein folding by increasing clearance of misfolded proteins such as SGCE variants or holding them in an intermediate state for proper refolding. May have a redundant function with TOR1B in non-neural tissues. The chain is Torsin-1A (Tor1a) from Mus musculus (Mouse).